A 366-amino-acid chain; its full sequence is Mitochondrial substrate carrier family protein H (366 aa).

Positions 1-25 (MLSNSVNNNNNNNNINNSNSNNNDS) are enriched in low complexity. Positions 1–26 (MLSNSVNNNNNNNNINNSNSNNNDSN) are disordered. 3 Solcar repeats span residues 29–121 (KNVK…LKEY), 132–243 (NIYT…LKNK), and 259–360 (SPFF…IKQS). A run of 6 helical transmembrane segments spans residues 35–55 (MVASIFGGIMSSLIVTPLDVV), 96–112 (GVTPSLLMTIPSATIYF), 133–151 (IYTVPLVAGTLARIFSASV), 175–192 (VAMAASSSTATIGTIPLS), 262–282 (FINFIAGATSGTLAAVLTTPI), and 340–357 (VAKVSPACAIMISTFEYI).

Belongs to the mitochondrial carrier (TC 2.A.29) family.

It is found in the mitochondrion inner membrane. Its function is as follows. Mitochondrial transporter required for glutathione import into mitochondria. The protein is Mitochondrial substrate carrier family protein H of Dictyostelium discoideum (Social amoeba).